Here is a 226-residue protein sequence, read N- to C-terminus: tRNA (guanine-N(1)-)-methyltransferase (226 aa).

S-adenosyl-L-methionine contacts are provided by residues Gly110 and 129-134; that span reads IGDYIL.

Belongs to the RNA methyltransferase TrmD family. As to quaternary structure, homodimer.

The protein resides in the cytoplasm. The enzyme catalyses guanosine(37) in tRNA + S-adenosyl-L-methionine = N(1)-methylguanosine(37) in tRNA + S-adenosyl-L-homocysteine + H(+). Specifically methylates guanosine-37 in various tRNAs. This chain is tRNA (guanine-N(1)-)-methyltransferase, found in Malacoplasma penetrans (strain HF-2) (Mycoplasma penetrans).